The primary structure comprises 609 residues: Pogo transposable element with KRAB domain (609 aa).

Disordered stretches follow at residues 1 to 28 (MEST…ELED) and 100 to 127 (EGEE…SDVK). A coiled-coil region spans residues 8–28 (LNLSLKEEEEEEEIQSRELED). A Glycyl lysine isopeptide (Lys-Gly) (interchain with G-Cter in SUMO2) cross-link involves residue K13. Residues 47–118 (ALFDEVAIYF…DEWQLQGGTS (72 aa)) form the KRAB domain. Over residues 108-119 (SDEWQLQGGTSA) the composition is skewed to polar residues. One can recognise an HTH CENPB-type domain in the interval 250 to 323 (AFRGPKNGRF…MRRYDLSLRH (74 aa)). The DDE-1 domain occupies 353–567 (HDYEVAQMGN…ISSESIVQGF (215 aa)). K384 participates in a covalent cross-link: Glycyl lysine isopeptide (Lys-Gly) (interchain with G-Cter in SUMO2). The segment at 588 to 609 (SELPGGGEPPKDCDTESMAESN) is disordered.

It is found in the nucleus. The sequence is that of Pogo transposable element with KRAB domain (POGK) from Homo sapiens (Human).